A 369-amino-acid chain; its full sequence is DNA replication and repair protein RecF (369 aa).

30–37 (GINAQGKT) serves as a coordination point for ATP.

Belongs to the RecF family.

Its subcellular location is the cytoplasm. Its function is as follows. The RecF protein is involved in DNA metabolism; it is required for DNA replication and normal SOS inducibility. RecF binds preferentially to single-stranded, linear DNA. It also seems to bind ATP. This Macrococcus caseolyticus (strain JCSC5402) (Macrococcoides caseolyticum) protein is DNA replication and repair protein RecF.